The chain runs to 130 residues: Putative protein ZNF815 (130 aa).

This is Putative protein ZNF815 (ZNF815P) from Homo sapiens (Human).